The following is an 84-amino-acid chain: ATP synthase subunit c (84 aa).

The next 2 helical transmembrane spans lie at 10 to 30 (IAVGIIVGLASLGTAIGFALL) and 53 to 73 (FIIAGLLDAVPMIGIVIALLF).

It belongs to the ATPase C chain family. F-type ATPases have 2 components, F(1) - the catalytic core - and F(0) - the membrane proton channel. F(1) has five subunits: alpha(3), beta(3), gamma(1), delta(1), epsilon(1). F(0) has three main subunits: a(1), b(2) and c(10-14). The alpha and beta chains form an alternating ring which encloses part of the gamma chain. F(1) is attached to F(0) by a central stalk formed by the gamma and epsilon chains, while a peripheral stalk is formed by the delta and b chains.

It localises to the cell inner membrane. Its function is as follows. F(1)F(0) ATP synthase produces ATP from ADP in the presence of a proton or sodium gradient. F-type ATPases consist of two structural domains, F(1) containing the extramembraneous catalytic core and F(0) containing the membrane proton channel, linked together by a central stalk and a peripheral stalk. During catalysis, ATP synthesis in the catalytic domain of F(1) is coupled via a rotary mechanism of the central stalk subunits to proton translocation. In terms of biological role, key component of the F(0) channel; it plays a direct role in translocation across the membrane. A homomeric c-ring of between 10-14 subunits forms the central stalk rotor element with the F(1) delta and epsilon subunits. The sequence is that of ATP synthase subunit c from Vibrio alginolyticus.